The following is a 239-amino-acid chain: UDP-2,3-diacylglucosamine hydrolase (239 aa).

Asp-9, His-11, Asp-42, Asn-80, and His-115 together coordinate Mn(2+). 80 to 81 (NR) provides a ligand contact to substrate. Substrate-binding residues include Asp-123, Ser-161, Lys-165, Lys-168, and His-196. His-196 and His-198 together coordinate Mn(2+).

It belongs to the LpxH family. Requires Mn(2+) as cofactor.

The protein localises to the cell inner membrane. The catalysed reaction is UDP-2-N,3-O-bis[(3R)-3-hydroxytetradecanoyl]-alpha-D-glucosamine + H2O = 2-N,3-O-bis[(3R)-3-hydroxytetradecanoyl]-alpha-D-glucosaminyl 1-phosphate + UMP + 2 H(+). It functions in the pathway glycolipid biosynthesis; lipid IV(A) biosynthesis; lipid IV(A) from (3R)-3-hydroxytetradecanoyl-[acyl-carrier-protein] and UDP-N-acetyl-alpha-D-glucosamine: step 4/6. In terms of biological role, hydrolyzes the pyrophosphate bond of UDP-2,3-diacylglucosamine to yield 2,3-diacylglucosamine 1-phosphate (lipid X) and UMP by catalyzing the attack of water at the alpha-P atom. Involved in the biosynthesis of lipid A, a phosphorylated glycolipid that anchors the lipopolysaccharide to the outer membrane of the cell. The sequence is that of UDP-2,3-diacylglucosamine hydrolase from Pasteurella multocida (strain Pm70).